Here is an 88-residue protein sequence, read N- to C-terminus: MLKLICIVFLVTVLTFVVGEDTLDPAEYGCPSDVDMAELTEKNEVCLRCEDFHKEGVAFTLCKTNCFTTEYYKNCVKDLEEAGKETEE.

The N-terminal stretch at 1–19 is a signal peptide; the sequence is MLKLICIVFLVTVLTFVVG. 3 disulfides stabilise this stretch: Cys30/Cys66, Cys46/Cys62, and Cys49/Cys75.

It belongs to the arthropod CHH/MIH/GIH/VIH hormone family. In terms of tissue distribution, expressed by the venom gland.

It localises to the secreted. In terms of biological role, may increase the toxicity of alpha-latrotoxin and/or other venom components. Is non-toxic to mice and to the cockroach Periplaneta americana. The protein is Alpha-latrotoxin associated low molecular weight protein 2 of Latrodectus geometricus (Brown widow spider).